The primary structure comprises 340 residues: Probable D,D-dipeptide transport system permease protein DdpB (340 aa).

Residues 1-11 are Periplasmic-facing; the sequence is MTFWSILRQRC. The helical transmembrane segment at 12–32 threads the bilayer; that stretch reads WGLVLVVAGVCVITFIISHLI. Over 33 to 104 the chain is Cytoplasmic; it reads PGDPARLLAG…IFFPATLELA (72 aa). Residues 97-327 enclose the ABC transmembrane type-1 domain; that stretch reads FPATLELAFG…LVNLVVDLLY (231 aa). The helical transmembrane segment at 105-125 threads the bilayer; it reads FGALLLALLIGIPLGILSAVW. At 126-135 the chain is on the periplasmic side; the sequence is RNRWLDHLVR. A helical membrane pass occupies residues 136–156; sequence IMAITGISTPAFWLGLGVIVL. The Cytoplasmic portion of the chain corresponds to 157 to 199; that stretch reads FYGHLQILPGGGRLDDWLDPPTHVTGFYLLDALLEGNGEVFFN. The helical transmembrane segment at 200–220 threads the bilayer; sequence ALQHLILPALTLAFVHLGIVA. Over 221-246 the chain is Periplasmic; that stretch reads RQIRSAMLEQLSEDYIRTARASGLPG. Residues 247–269 traverse the membrane as a helical segment; that stretch reads WYIVLCYALPNALIPSITVLGLA. Topologically, residues 270-279 are cytoplasmic; the sequence is LGDLLYGAVL. The helical transmembrane segment at 280–300 threads the bilayer; it reads TETVFAWPGMGAWVVTSIQAL. D301 is a topological domain (periplasmic). A helical transmembrane segment spans residues 302 to 322; that stretch reads FPAVMGFAVVVSFAYVLVNLV. The Cytoplasmic segment spans residues 323–340; the sequence is VDLLYLWIDPRIGRGGGE.

Belongs to the binding-protein-dependent transport system permease family. OppBC subfamily. In terms of assembly, the complex is composed of two ATP-binding proteins (DdpD and DdpF), two transmembrane proteins (DdpB and DdpC) and a solute-binding protein (DdpA).

Its subcellular location is the cell inner membrane. Its function is as follows. Part of the ABC transporter complex DdpABCDF, which is probably involved in D,D-dipeptide transport. Probably responsible for the translocation of the substrate across the membrane. The sequence is that of Probable D,D-dipeptide transport system permease protein DdpB (ddpB) from Escherichia coli (strain K12).